A 144-amino-acid chain; its full sequence is UPF0735 ACT domain-containing protein LCABL_12100 (144 aa).

Residues 68 to 143 (VISLMLHHDR…GVSDVHLVSV (76 aa)) form the ACT domain.

The protein belongs to the UPF0735 family.

The sequence is that of UPF0735 ACT domain-containing protein LCABL_12100 from Lacticaseibacillus casei (strain BL23) (Lactobacillus casei).